Consider the following 368-residue polypeptide: Cyclic GMP-AMP synthase-like receptor (368 aa).

Residues S60 and 72–74 (EYD) each bind ATP. Mg(2+)-binding residues include E72, D74, and D190. GTP contacts are provided by residues D190 and 229–236 (RASFYRQE). ATP-binding positions include 233–236 (YRQE), K254, and 268–272 (SYFIK).

This sequence belongs to the mab-21 family. It depends on Mg(2+) as a cofactor. Mn(2+) serves as cofactor.

It catalyses the reaction GTP + ATP = 3',2'-cGAMP + 2 diphosphate. The catalysed reaction is GTP + ATP = pppA(2'-5')pG + diphosphate. It carries out the reaction pppA(2'-5')pG = 3',2'-cGAMP + diphosphate. The enzyme activity is specifically activated by double-stranded RNA (dsRNA). Nucleotidyltransferase that catalyzes the formation of cyclic GMP-AMP (3',2'-cGAMP) from ATP and GTP and plays a key role in innate immunity. Synthesizes 3',2'-cGAMP in a two-step reaction through production of the linear intermediate pppA(2'-5')pG. Acts as a key sensor of double-stranded RNA (dsRNA), the presence of dsRNA in the cytoplasm being a danger signal that triggers the immune responses. Directly binds dsRNA, activating the nucleotidyltransferase activity, leading to synthesis of 3',2'-cGAMP, a second messenger that binds to and activates Sting, thereby triggering the antiviral immune response via activation of the NF-kappa-B transcription factor Rel (Relish). The polypeptide is Cyclic GMP-AMP synthase-like receptor (Lucilia cuprina (Green bottle fly)).